Here is a 239-residue protein sequence, read N- to C-terminus: Phospholipase A2 (239 aa).

An N-terminal signal peptide occupies residues 1–19 (MSLIIVLVISVLSADAVLS). Positions 20–105 (MDNELYLNLE…GRCLSVGESE (86 aa)) are excised as a propeptide. Residues Trp113, Gly115, and Gly117 each coordinate Ca(2+). Cystine bridges form between Cys114/Cys136, Cys135/Cys174, Cys142/Cys167, Cys165/Cys202, and Cys207/Cys217. Residue His139 is part of the active site. Asp140 lines the Ca(2+) pocket. A propeptide spanning residues 211–213 (RSP) is cleaved from the precursor.

It belongs to the phospholipase A2 family. Group III subfamily. In terms of assembly, heterodimer composed of a small subunit and a large subunit; disulfid-linked. The cofactor is Ca(2+). In terms of tissue distribution, expressed by the venom gland.

Its subcellular location is the secreted. The enzyme catalyses a 1,2-diacyl-sn-glycero-3-phosphocholine + H2O = a 1-acyl-sn-glycero-3-phosphocholine + a fatty acid + H(+). Toxic phospholipase A2, which may catalyze the calcium-dependent hydrolysis of the 2-acyl groups in 3-sn-phosphoglycerides. Inhibits both skeletal (RYR1) and cardiac (RYR2) ryanodine receptors (calcium release channels). Probably blocks ryanodine receptors by generating a lipid product. This Hoffmannihadrurus gertschi (Scorpion) protein is Phospholipase A2.